A 182-amino-acid chain; its full sequence is Protein Syd (182 aa).

This sequence belongs to the Syd family.

It localises to the cell inner membrane. In terms of biological role, interacts with the SecY protein in vivo. May bind preferentially to an uncomplexed state of SecY, thus functioning either as a chelating agent for excess SecY in the cell or as a regulatory factor that negatively controls the translocase function. The chain is Protein Syd from Aliivibrio salmonicida (strain LFI1238) (Vibrio salmonicida (strain LFI1238)).